The chain runs to 274 residues: Siroheme biosynthesis protein MET8 (274 aa).

Residues Glu-23–Val-24, Ser-43–Asp-45, and Phe-93 contribute to the NAD(+) site. The active-site Proton acceptor is the Asp-141.

This sequence belongs to the precorrin-2 dehydrogenase / sirohydrochlorin ferrochelatase family. MET8 subfamily. As to quaternary structure, homodimer.

The enzyme catalyses precorrin-2 + NAD(+) = sirohydrochlorin + NADH + 2 H(+). It carries out the reaction siroheme + 2 H(+) = sirohydrochlorin + Fe(2+). Its pathway is porphyrin-containing compound metabolism; siroheme biosynthesis; siroheme from sirohydrochlorin: step 1/1. It participates in porphyrin-containing compound metabolism; siroheme biosynthesis; sirohydrochlorin from precorrin-2: step 1/1. Functionally, catalyzes the conversion of precorrin-2 into siroheme. This reaction consist of the NAD-dependent oxidation of precorrin-2 into sirohydrochlorin and its subsequent ferrochelation into siroheme. The sequence is that of Siroheme biosynthesis protein MET8 from Saccharomyces cerevisiae (strain ATCC 204508 / S288c) (Baker's yeast).